A 1059-amino-acid polypeptide reads, in one-letter code: RNA-binding protein 26 (1059 aa).

Basic and acidic residues-rich tracts occupy residues 98–114 and 130–147; these read EKEIKKDEVNKEEEKEK and RHKDTRENRKRSNSDRES. The tract at residues 98 to 275 is disordered; the sequence is EKEIKKDEVN…PVDNSYASGS (178 aa). The span at 172-182 shows a compositional bias: polar residues; the sequence is LNSNKVQNAKN. Basic and acidic residues predominate over residues 184 to 213; that stretch reads RSRDDRKRDDRFRKREYDRNVPRRDSYRDR. The span at 214–231 shows a compositional bias: basic residues; sequence YNRRRGRSRSYSRSRSRS. Residues 232–266 show a composition bias toward basic and acidic residues; it reads WSKERQRDRDRSRSRTRSRDKDSGKPKFDLDRPDP. The C3H1-type zinc-finger motif lies at 327–355; that stretch reads QMQKKRCRDYDEKGFCMRGDMCPFDHGSD. Pro residues predominate over residues 375–428; it reads PVLEGPPPPGLPPPPSLLTPPPVNLQPPPVPPPGPLPPSLPPVTGPPPPLPPLQ. The tract at residues 375–443 is disordered; sequence PVLEGPPPPG…APPNSATSSV (69 aa). Low complexity predominate over residues 434–443; sequence APPNSATSSV. One can recognise an RRM 1 domain in the interval 581-655; that stretch reads TKLELRRIPP…RFIRMYWHRE (75 aa). Residues 771–873 adopt a coiled-coil conformation; the sequence is GDAQKKKQEA…LLDTELDLYN (103 aa). An RRM 2 domain is found at 942–1011; it reads RALKISGFTE…QDLKLAWNKP (70 aa). Residues 1010-1059 form a disordered region; the sequence is KPVPNASSTEVEDADQEEEEFHEDSIVDDSLLQDDDEEEEDDNESRSWRR. 2 stretches are compositionally biased toward acidic residues: residues 1019–1031 and 1040–1052; these read EVEDADQEEEEFH and LLQDDDEEEEDDN.

Functionally, may be involved in the turnover of nuclear polyadenylated (pA+) RNA. The protein is RNA-binding protein 26 of Xenopus laevis (African clawed frog).